The chain runs to 631 residues: MNQLTNLSPADLSAQHEQDAKDLTRILPASTKVYIQGSRPDIQVPMRQIALTDTPTGLGGEKNPPVMVYDTSGVYTDPEVAIDLNKGLPHVRQAWIEERQDTDVLDTLSSSFGQERLKDIRTADIRFAHIQKPRRAKTGQNVTQMHYAKKGMITPEMEYIAIRENQRQRDEVDMRQHAGQNFGAKNLTEITPEFVRQEVAAGRAIIPANINHPEIEPMIIGRNFLVKINANIGNSALGSSIDEEVSKMTWATRWGADTIMDLSTGKNIHETREWIIRNSPVPIGTVPIYQALEKVDGVAEDLTWEIFKDTLIEQAEQGVDYFTIHAGVLLRYVPLTANRLTGIVSRGGSIMAQWCLAHHEENFLYTHFDEICEIMKAYDVSFSLGDGLRPGCIQDANDEAQFGELRTLGELTHRAWEHDVQVMIEGPGHVPMHMIKENMDLQLEVCKEAPFYTLGPLTTDIAPGYDHITSAIGAAMIGWYGTAMLCYVTPKEHLGLPNKKDVKDGIITYKIAAHAADLAKGHPGAQVRDNALSKARFEFRWDDQFNLSLDPDTARSMHDETLPKEAHKSAHFCSMCGPKFCSMKITQNVRNYAQNQETAKDFNPSTEEVEQGLKSMKQAYHDNGQKLYQKV.

Substrate is bound by residues Asn231, Met260, Tyr289, His325, 345–347, 386–389, and Glu425; these read SRG and DGLR. His429 serves as a coordination point for Zn(2+). Tyr452 provides a ligand contact to substrate. Residue His493 participates in Zn(2+) binding. The [4Fe-4S] cluster site is built by Cys573, Cys576, and Cys581.

This sequence belongs to the ThiC family. In terms of assembly, homodimer. The cofactor is [4Fe-4S] cluster.

The enzyme catalyses 5-amino-1-(5-phospho-beta-D-ribosyl)imidazole + S-adenosyl-L-methionine = 4-amino-2-methyl-5-(phosphooxymethyl)pyrimidine + CO + 5'-deoxyadenosine + formate + L-methionine + 3 H(+). The protein operates within cofactor biosynthesis; thiamine diphosphate biosynthesis. Its function is as follows. Catalyzes the synthesis of the hydroxymethylpyrimidine phosphate (HMP-P) moiety of thiamine from aminoimidazole ribotide (AIR) in a radical S-adenosyl-L-methionine (SAM)-dependent reaction. In Acinetobacter baylyi (strain ATCC 33305 / BD413 / ADP1), this protein is Phosphomethylpyrimidine synthase.